Here is an 87-residue protein sequence, read N- to C-terminus: Large ribosomal subunit protein bL31B (87 aa).

This sequence belongs to the bacterial ribosomal protein bL31 family. Type B subfamily. As to quaternary structure, part of the 50S ribosomal subunit.

This Salinispora arenicola (strain CNS-205) protein is Large ribosomal subunit protein bL31B.